Consider the following 234-residue polypeptide: Probable GTP-binding protein EngB (234 aa).

One can recognise an EngB-type G domain in the interval 23-209; that stretch reads AVPEVAFAGR…QRTVAGWLCL (187 aa). GTP contacts are provided by residues 31-38, 58-62, 82-85, 149-152, and 187-190; these read GRSNAGKS, GRTQH, DLPG, TKAD, and LFSS. 2 residues coordinate Mg(2+): Ser38 and Thr60. The segment at 210 to 234 is disordered; that stretch reads PEAMPPSPDAEPAKKTPSPDAQRGE.

It belongs to the TRAFAC class TrmE-Era-EngA-EngB-Septin-like GTPase superfamily. EngB GTPase family. Requires Mg(2+) as cofactor.

Its function is as follows. Necessary for normal cell division and for the maintenance of normal septation. In Ralstonia nicotianae (strain ATCC BAA-1114 / GMI1000) (Ralstonia solanacearum), this protein is Probable GTP-binding protein EngB.